We begin with the raw amino-acid sequence, 150 residues long: Urease accessory protein UreE (150 aa).

Belongs to the UreE family.

Its subcellular location is the cytoplasm. Its function is as follows. Involved in urease metallocenter assembly. Binds nickel. Probably functions as a nickel donor during metallocenter assembly. In Staphylococcus saprophyticus subsp. saprophyticus (strain ATCC 15305 / DSM 20229 / NCIMB 8711 / NCTC 7292 / S-41), this protein is Urease accessory protein UreE.